The chain runs to 244 residues: Ribonuclease 3 (244 aa).

Positions 7-134 (FEEVEKTLNI…IIAAIYIDSG (128 aa)) constitute an RNase III domain. Mg(2+) is bound at residue Glu47. Asp51 is a catalytic residue. Mg(2+) contacts are provided by Asn120 and Glu123. Glu123 is a catalytic residue. The region spanning 161-230 (DYKTNLQEIV…AQDALKKLKS (70 aa)) is the DRBM domain.

It belongs to the ribonuclease III family. As to quaternary structure, homodimer. Mg(2+) serves as cofactor.

Its subcellular location is the cytoplasm. The enzyme catalyses Endonucleolytic cleavage to 5'-phosphomonoester.. Digests double-stranded RNA. Involved in the processing of primary rRNA transcript to yield the immediate precursors to the large and small rRNAs (23S and 16S). Processes some mRNAs, and tRNAs when they are encoded in the rRNA operon. Processes pre-crRNA and tracrRNA of type II CRISPR loci if present in the organism. The protein is Ribonuclease 3 of Clostridium kluyveri (strain NBRC 12016).